The chain runs to 145 residues: Ribosome-binding factor A (145 aa).

A compositionally biased stretch (basic residues) spans 1–10; sequence MKRPSSHGRR. Disordered stretches follow at residues 1–21 and 124–145; these read MKRPSSHGRRPPQGPSQRQLR and DDPKVRQDLTPQPPSDSWKDED.

The protein belongs to the RbfA family. As to quaternary structure, monomer. Binds 30S ribosomal subunits, but not 50S ribosomal subunits or 70S ribosomes.

The protein resides in the cytoplasm. Functionally, one of several proteins that assist in the late maturation steps of the functional core of the 30S ribosomal subunit. Associates with free 30S ribosomal subunits (but not with 30S subunits that are part of 70S ribosomes or polysomes). Required for efficient processing of 16S rRNA. May interact with the 5'-terminal helix region of 16S rRNA. This is Ribosome-binding factor A from Phenylobacterium zucineum (strain HLK1).